A 148-amino-acid polypeptide reads, in one-letter code: HTH-type transcriptional regulator Rv2324 (148 aa).

The HTH asnC-type domain occupies 4–65; that stretch reads LDDTDERILA…VVDRNALGWN (62 aa). Positions 23 to 42 form a DNA-binding region, H-T-H motif; it reads FAEIGHKVSLSAPAVKRRVD.

In terms of assembly, homodimer. Forms oligomers.

With respect to regulation, the DNA-binding activity of Rv2324 is modulated by interaction of Rv2324 with amino acids. Aspartate is the only effector amino acid that completely abolishes DNA binding. The majority of amino acids induce a dimer-tetramer or dimer-hexamer oligomeric transition. In response to amino-acid binding, adopts an open quaternary association, which is a part of the functional requirement to bind to non-symmetrically distributed target DNA binding sites. Its function is as follows. Transcriptional regulator involved in growth, DNA replication and damage control. Plays a crucial role in regulating survival and growth of M.tuberculosis. Could function as a global regulator in both the latent/persistent and active phases of growth. Binds to its own promoter region and to promoters of multiple metabolic genes, such as serB2, lat, ald and roc operon. In vitro, interacts with intrinsically curved and non-curved DNA molecules, and with both supercoiled and linear DNA, with higher affinity for supercoiled DNA. Binds to DNA recombination, replication and repair intermediates. The sequence is that of HTH-type transcriptional regulator Rv2324 from Mycobacterium tuberculosis (strain ATCC 25618 / H37Rv).